The sequence spans 372 residues: N-acetylneuraminate-9-phosphate synthase (372 aa).

The region spanning 314–372 (SIVAARNLNKGYRLQLADMAIKVSEPSGLTAEDFLDLVGKELADNIGEDEPILGNSIIN) is the AFP-like domain.

It catalyses the reaction aldehydo-N-acetyl-D-mannosamine 6-phosphate + phosphoenolpyruvate + H2O = N-acetylneuraminate 9-phosphate + phosphate. The catalysed reaction is aldehydo-D-mannose 6-phosphate + phosphoenolpyruvate + H2O = 3-deoxy-D-glycero-beta-D-galacto-non-2-ulopyranosonate 9-phosphate + phosphate. Its function is as follows. Catalyzes the condensation of phosphoenolpyruvate (PEP) and N-acetylmannosamine 6-phosphate (ManNAc-6-P) or D-mannose 6-phosphate (Man-6-P) to generate the phosphorylated forms of both the sialic acids N-acetylneuraminic acid (Neu5Ac) and deaminoneuraminic acid (KDN), respectively. Essential for biosynthesis of sialic acids in neurons of the central nervous system. This is N-acetylneuraminate-9-phosphate synthase from Drosophila melanogaster (Fruit fly).